We begin with the raw amino-acid sequence, 217 residues long: Membrane-spanning 4-domains subfamily A member 6C (217 aa).

The segment covering 1 to 20 (MIPQVVTNETITTISPNGIN) has biased composition (polar residues). The tract at residues 1 to 33 (MIPQVVTNETITTISPNGINFPQKDESQPTQQR) is disordered. Residues 1–46 (MIPQVVTNETITTISPNGINFPQKDESQPTQQRQDSLKKHLKAEIK) are Cytoplasmic-facing. A helical transmembrane segment spans residues 47-67 (VIVAIQIMCAVTVLALGIILA). Over 68–84 (SVPPVPYFNSVFSVLLK) the chain is Extracellular. Residues 85–105 (SGYPFIGALFFIASGILSIIT) traverse the membrane as a helical segment. Topologically, residues 106-121 (ERKSTKPLVDASLTLN) are cytoplasmic. A helical membrane pass occupies residues 122 to 142 (ILSVSFAFVGIIIISVSLAGL). The Extracellular portion of the chain corresponds to 143–186 (HPASEQCKQSKELSLIEHDYYQPFYNSDRSECAVTKSILTGALS). A helical transmembrane segment spans residues 187 to 207 (VMLIISVLELGLALLSAMLWL). The Cytoplasmic portion of the chain corresponds to 208–217 (REGVLTSLRM).

It belongs to the MS4A family. As to expression, expressed only by thymus, spleen, peripheral lymph node and bone marrow.

It localises to the membrane. Functionally, may be involved in signal transduction as a component of a multimeric receptor complex. The chain is Membrane-spanning 4-domains subfamily A member 6C (Ms4a6c) from Mus musculus (Mouse).